The primary structure comprises 231 residues: Cell cycle transcriptional regulator CtrA (231 aa).

Residues 2–116 (RVLLIEDDSA…EMIARIHAVV (115 aa)) form the Response regulatory domain. 4-aspartylphosphate is present on D51. Residues 124 to 223 (QSVIKTGDIV…VWGRGYVLRD (100 aa)) constitute a DNA-binding region (ompR/PhoB-type).

Phosphorylated by CckA.

In terms of biological role, forms part of a two-component regulatory system CtrA/CckA that controls multiple events in the cell cycle, including cell division, stalk synthesis and cell cycle-specific transcription. Binds to a group of cell cycle-regulated promoters critical for DNA replication, DNA methylation, and class II flagellar biogenesis. This chain is Cell cycle transcriptional regulator CtrA (ctrA), found in Caulobacter vibrioides (strain ATCC 19089 / CIP 103742 / CB 15) (Caulobacter crescentus).